A 101-amino-acid chain; its full sequence is Large ribosomal subunit protein uL23 (101 aa).

The protein belongs to the universal ribosomal protein uL23 family. In terms of assembly, part of the 50S ribosomal subunit. Contacts protein L29, and trigger factor when it is bound to the ribosome.

Its function is as follows. One of the early assembly proteins it binds 23S rRNA. One of the proteins that surrounds the polypeptide exit tunnel on the outside of the ribosome. Forms the main docking site for trigger factor binding to the ribosome. The sequence is that of Large ribosomal subunit protein uL23 from Kocuria rhizophila (strain ATCC 9341 / DSM 348 / NBRC 103217 / DC2201).